A 1235-amino-acid chain; its full sequence is DNA polymerase catalytic subunit (1235 aa).

Disordered stretches follow at residues 640-692 (QGRF…TAGR) and 1098-1134 (AAAP…ASKP). A compositionally biased stretch (basic and acidic residues) spans 650 to 661 (APKRPAAAREDE). The span at 662-675 (ERPEEEGEDEDERE) shows a compositional bias: acidic residues. Positions 676 to 691 (EGGGEREPEGARETAG) are enriched in basic and acidic residues.

It belongs to the DNA polymerase type-B family. As to quaternary structure, forms a complex with the ssDNA-binding protein UL29, the DNA polymerase processivity factor, and the alkaline exonuclease. Interacts with the putative helicase-primase complex subunit UL8; this interaction may coordinate leading and lagging strand DNA synthesis at the replication fork.

The protein localises to the host nucleus. It catalyses the reaction DNA(n) + a 2'-deoxyribonucleoside 5'-triphosphate = DNA(n+1) + diphosphate. The catalysed reaction is Endonucleolytic cleavage to 5'-phosphomonoester.. Replicates viral genomic DNA. The replication complex is composed of six viral proteins: the DNA polymerase, processivity factor, primase, primase-associated factor, helicase, and ssDNA-binding protein. Additionally, the polymerase contains an intrinsic ribonuclease H (RNase H) activity that specifically degrades RNA/DNA heteroduplexes or duplex DNA substrates in the 5' to 3' direction. Therefore, it can catalyze the excision of the RNA primers that initiate the synthesis of Okazaki fragments at a replication fork during viral DNA replication. This is DNA polymerase catalytic subunit from Homo sapiens (Human).